A 303-amino-acid chain; its full sequence is Exosome complex component RRP4 homolog (303 aa).

A KH domain is found at 175-213 (GILIKVPPHLIKKSKKHFHTLPYGMAVIIGCNGSVWVTP).

Belongs to the RRP4 family. In terms of assembly, component of the RNA exosome complex. As to expression, ubiquitously expressed.

It is found in the nucleus. The protein resides in the nucleolus. The protein localises to the nucleoplasm. Functionally, non-catalytic component of the RNA exosome complex which has 3'-&gt;5' exoribonuclease activity and participates in a multitude of cellular RNA processing and degradation events. Involved in regulation of antisense ribosomal siRNA production. Involved in response to cold-warm shock. The polypeptide is Exosome complex component RRP4 homolog (Caenorhabditis elegans).